Here is a 334-residue protein sequence, read N- to C-terminus: MADQIAISVLGAGSYGSALAISLARNGHPTLLWGHDPAHVAELEQDRCNKAFLPDVPFPADLQLTADLQQAVQAAPVLLLVVPSHVFGQVLAQVKPFLRPDTRIAWATKGLEPDSGRLLQDVAREVLGDEMPLAVISGPTFAKELAAGLPTAISVASTHDDFADDLSLLLHCGRSFRVYTNPDFIGLQLGGAVKNVIAIGAGLSDGLGFGANARTALITRGLVEMQRLGAALGADAKTFMGMAGLGDLVLTCTDNQSRNRRFGLALGAGKDVNTAMAEIGQVVEGYRNTKEVHLLAARCGVEMPICEQIFKVLYEGKNPKEAAIALLSRDKKDE.

NADPH contacts are provided by S14, Y15, H35, and K109. Sn-glycerol 3-phosphate contacts are provided by K109, G138, and T140. NADPH is bound at residue A142. The sn-glycerol 3-phosphate site is built by K194, D247, S257, R258, and N259. K194 serves as the catalytic Proton acceptor. R258 contributes to the NADPH binding site. Positions 282 and 284 each coordinate NADPH.

Belongs to the NAD-dependent glycerol-3-phosphate dehydrogenase family.

Its subcellular location is the cytoplasm. It catalyses the reaction sn-glycerol 3-phosphate + NAD(+) = dihydroxyacetone phosphate + NADH + H(+). It carries out the reaction sn-glycerol 3-phosphate + NADP(+) = dihydroxyacetone phosphate + NADPH + H(+). It participates in membrane lipid metabolism; glycerophospholipid metabolism. In terms of biological role, catalyzes the reduction of the glycolytic intermediate dihydroxyacetone phosphate (DHAP) to sn-glycerol 3-phosphate (G3P), the key precursor for phospholipid synthesis. The chain is Glycerol-3-phosphate dehydrogenase [NAD(P)+] from Aeromonas hydrophila subsp. hydrophila (strain ATCC 7966 / DSM 30187 / BCRC 13018 / CCUG 14551 / JCM 1027 / KCTC 2358 / NCIMB 9240 / NCTC 8049).